Reading from the N-terminus, the 539-residue chain is Copine-C (539 aa).

C2 domains lie at 1 to 120 (MIPS…KIVA) and 128 to 251 (VTGK…PLIN). Ca(2+)-binding residues include Leu23, Asp24, Asp30, Asp83, Asp85, and Asp98. Residues 290–507 (SLMTAIDCTG…ALAQETLKEI (218 aa)) form the VWFA domain.

This sequence belongs to the copine family. Ca(2+) is required as a cofactor.

The chain is Copine-C (cpnC) from Dictyostelium discoideum (Social amoeba).